Reading from the N-terminus, the 564-residue chain is Probable cysteine--tRNA ligase, mitochondrial (564 aa).

C78 is a Zn(2+) binding site. G79 provides a ligand contact to L-cysteine. Positions 80–90 (PTVYDHAHLGH) match the 'HIGH' region motif. T119 is an L-cysteine binding site. The short motif at 124–127 (KIIK) is the 'KIIK' region element. Residues C257, H282, and E286 each contribute to the Zn(2+) site. Position 282 (H282) interacts with L-cysteine. Residues 317–321 (KMSKS) carry the 'KMSKS' region motif. K320 is a binding site for ATP.

This sequence belongs to the class-I aminoacyl-tRNA synthetase family. Zn(2+) is required as a cofactor.

Its subcellular location is the mitochondrion. The enzyme catalyses tRNA(Cys) + L-cysteine + ATP = L-cysteinyl-tRNA(Cys) + AMP + diphosphate. The catalysed reaction is 2 L-cysteine = S-sulfanyl-L-cysteine + L-alanine. It catalyses the reaction S-sulfanyl-L-cysteine + L-cysteine = S-disulfanyl-L-cysteine + L-alanine. It carries out the reaction S-sulfanyl-L-cysteine + tRNA(Cys) + ATP = (S)-sulfanyl-L-cysteinyl-tRNA(Cys) + AMP + diphosphate. The enzyme catalyses S-disulfanyl-L-cysteine + tRNA(Cys) + ATP = (S)-disulfanyl-L-cysteinyl-tRNA(Cys) + AMP + diphosphate. In terms of biological role, mitochondrial cysteine-specific aminoacyl-tRNA synthetase that catalyzes the ATP-dependent ligation of cysteine to tRNA(Cys). In addition to its role as an aminoacyl-tRNA synthetase, has also cysteine persulfide synthase activity. Produces reactive persulfide species such as cysteine persulfide (CysSSH) from substrate cysteine and mediate direct incorporation of CysSSH into proteins during translations, resulting in protein persulfides and polysulfides. CysSSHs behave as potent antioxidants and cellular protectants. In Homo sapiens (Human), this protein is Probable cysteine--tRNA ligase, mitochondrial.